Reading from the N-terminus, the 320-residue chain is Acetyl-coenzyme A carboxylase carboxyl transferase subunit alpha (320 aa).

The CoA carboxyltransferase C-terminal domain maps to 41 to 295 (RIEEKAGQAL…GEAIAQAFDE (255 aa)).

The protein belongs to the AccA family. Acetyl-CoA carboxylase is a heterohexamer composed of biotin carboxyl carrier protein (AccB), biotin carboxylase (AccC) and two subunits each of ACCase subunit alpha (AccA) and ACCase subunit beta (AccD).

Its subcellular location is the cytoplasm. It carries out the reaction N(6)-carboxybiotinyl-L-lysyl-[protein] + acetyl-CoA = N(6)-biotinyl-L-lysyl-[protein] + malonyl-CoA. It participates in lipid metabolism; malonyl-CoA biosynthesis; malonyl-CoA from acetyl-CoA: step 1/1. Its function is as follows. Component of the acetyl coenzyme A carboxylase (ACC) complex. First, biotin carboxylase catalyzes the carboxylation of biotin on its carrier protein (BCCP) and then the CO(2) group is transferred by the carboxyltransferase to acetyl-CoA to form malonyl-CoA. This chain is Acetyl-coenzyme A carboxylase carboxyl transferase subunit alpha, found in Bradyrhizobium sp. (strain BTAi1 / ATCC BAA-1182).